The primary structure comprises 420 residues: D-tagatose-1,6-bisphosphate aldolase subunit GatZ (420 aa).

The protein belongs to the GatZ/KbaZ family. GatZ subfamily. As to quaternary structure, forms a complex with GatY.

The protein operates within carbohydrate metabolism; D-tagatose 6-phosphate degradation; D-glyceraldehyde 3-phosphate and glycerone phosphate from D-tagatose 6-phosphate: step 2/2. Its function is as follows. Component of the tagatose-1,6-bisphosphate aldolase GatYZ that is required for full activity and stability of the Y subunit. Could have a chaperone-like function for the proper and stable folding of GatY. When expressed alone, GatZ does not show any aldolase activity. Is involved in the catabolism of galactitol. This Escherichia coli O9:H4 (strain HS) protein is D-tagatose-1,6-bisphosphate aldolase subunit GatZ.